A 333-amino-acid chain; its full sequence is Regulator of rDNA transcription protein 5 (333 aa).

The interval 1–22 (MFERQSNNPEPIEVSDNNPERE) is disordered. The 84-residue stretch at 31-114 (TRIYISNLDY…RNLKVKLYVP (84 aa)) folds into the RRM 1 domain. 2 disordered regions span residues 123–185 (PAPK…DTVY) and 281–333 (GIAE…SVVA). A compositionally biased stretch (basic residues) spans 125-137 (PKPRRLSKLRRSK). 2 stretches are compositionally biased toward polar residues: residues 145–160 (NAASQDPTVEATQERG) and 169–182 (AANNAKQAKPTSDD). One can recognise an RRM 2 domain in the interval 182-267 (DTVYCGYLPK…KKISVKPAYI (86 aa)). Over residues 298–308 (GNGGQPAGPGV) the composition is skewed to gly residues. Positions 313 to 327 (SNPQQNCDNSNNVQP) are enriched in polar residues.

The protein belongs to the RRT5 family.

Functionally, may be involved in the modulation of rDNA transcription. The sequence is that of Regulator of rDNA transcription protein 5 (RRT5) from Vanderwaltozyma polyspora (strain ATCC 22028 / DSM 70294 / BCRC 21397 / CBS 2163 / NBRC 10782 / NRRL Y-8283 / UCD 57-17) (Kluyveromyces polysporus).